We begin with the raw amino-acid sequence, 140 residues long: Nucleoside diphosphate kinase (140 aa).

ATP-binding residues include Lys-11, Phe-59, Arg-87, Thr-93, Arg-104, and Asn-114. His-117 acts as the Pros-phosphohistidine intermediate in catalysis.

This sequence belongs to the NDK family. Homotetramer. Mg(2+) serves as cofactor.

It is found in the cytoplasm. The catalysed reaction is a 2'-deoxyribonucleoside 5'-diphosphate + ATP = a 2'-deoxyribonucleoside 5'-triphosphate + ADP. It catalyses the reaction a ribonucleoside 5'-diphosphate + ATP = a ribonucleoside 5'-triphosphate + ADP. Functionally, major role in the synthesis of nucleoside triphosphates other than ATP. The ATP gamma phosphate is transferred to the NDP beta phosphate via a ping-pong mechanism, using a phosphorylated active-site intermediate. The protein is Nucleoside diphosphate kinase of Rickettsia prowazekii (strain Madrid E).